The sequence spans 65 residues: Large ribosomal subunit protein bL35 (65 aa).

The protein belongs to the bacterial ribosomal protein bL35 family.

The chain is Large ribosomal subunit protein bL35 from Borrelia duttonii (strain Ly).